The chain runs to 423 residues: Polyglutamylase complex subunit TTLL1 (423 aa).

The region spanning 1-367 (MAGKVKWVTD…NGEIPDCKWN (367 aa)) is the TTL domain. ATP-binding positions include lysine 138, 144 to 145 (QG), 181 to 184 (SLYI), and 194 to 196 (KFD). Glutamine 144 is an a protein binding site. An L-glutamate-binding site is contributed by arginine 220. Position 241-242 (241-242 (TN)) interacts with ATP. Residue lysine 259 participates in L-glutamate binding. Residues aspartate 313, glutamate 326, and asparagine 328 each coordinate Mg(2+). Residue lysine 344 coordinates L-glutamate. The interval 391 to 423 (GADRELRSRQGQSLGPRAGRSRDSGRAVLTTWK) is disordered.

It belongs to the tubulin polyglutamylase family. As to quaternary structure, part of the neuronal tubulin polyglutamylase complex which contains TPGS1, TPGS2, TTLL1, LRRC49 and NICN1. Interacts with PCM1, CSTPP1 and LRRC49. Mg(2+) is required as a cofactor. As to expression, expressed in a wide range of tissues. Has a stronger expression in heart, brain and testis.

Its subcellular location is the cytoplasm. The protein localises to the cytoskeleton. The protein resides in the cilium basal body. It is found in the cilium axoneme. It localises to the cell projection. Its subcellular location is the cilium. The protein localises to the flagellum. It carries out the reaction (L-glutamyl)(n)-gamma-L-glutamyl-L-glutamyl-[protein] + L-glutamate + ATP = (L-glutamyl)(n+1)-gamma-L-glutamyl-L-glutamyl-[protein] + ADP + phosphate + H(+). Functionally, catalytic subunit of a polyglutamylase complex which modifies tubulin, generating side chains of glutamate on the gamma-carboxyl group of specific glutamate residues within the C-terminal tail of tubulin. Probably involved in the side-chain elongation step of the polyglutamylation reaction rather than the initiation step. Modifies both alpha- and beta-tubulins with a preference for the alpha-tail. Unlike most polyglutamylases of the tubulin--tyrosine ligase family, only displays a catalytic activity when in complex with other proteins as it is most likely lacking domains important for autonomous activity. Part of the neuronal tubulin polyglutamylase complex. Mediates cilia and flagella polyglutamylation which is essential for their biogenesis and motility. Involved in respiratory motile cilia function through the regulation of beating asymmetry. Essential for sperm flagella biogenesis, motility and male fertility. Involved in KLF4 glutamylation which impedes its ubiquitination, thereby leading to somatic cell reprogramming, pluripotency maintenance and embryogenesis. In Homo sapiens (Human), this protein is Polyglutamylase complex subunit TTLL1.